The sequence spans 261 residues: Cytochrome c oxidase subunit 3 (261 aa).

Residues 1 to 15 (MTHQTHAYHMVNPSP) are Mitochondrial matrix-facing. The helical transmembrane segment at 16–34 (WPLTGALSALLMTSGLTMW) threads the bilayer. The Mitochondrial intermembrane portion of the chain corresponds to 35–40 (FHFNST). A helical transmembrane segment spans residues 41–66 (ILLMLGLTTNMLTMYQWWRDIIREST). The Mitochondrial matrix portion of the chain corresponds to 67-72 (FQGHHT). Residues 73-105 (PVVQKGLRYGMILFIISEVLFFTGFFWAFYHSS) form a helical membrane-spanning segment. At 106–128 (LAPTPELGGCWPPTGIHPLNPLE) the chain is on the mitochondrial intermembrane side. Residues 129 to 152 (VPLLNTSVLLASGVSITWAHHSLM) traverse the membrane as a helical segment. Residues 153–155 (EGH) are Mitochondrial matrix-facing. Residues 156 to 183 (RNHMLQALFITIALGVYFTLLQASEYYE) form a helical membrane-spanning segment. Residues 184–190 (APFTISD) lie on the Mitochondrial intermembrane side of the membrane. The chain crosses the membrane as a helical span at residues 191 to 223 (GVYGSTFFVATGFHGLHVIIGSTFLIVCFFRQL). Topologically, residues 224 to 232 (KFHFTSSHH) are mitochondrial matrix. Residues 233-256 (FGFEAAAWYWHFVDVVWLFLYVSI) form a helical membrane-spanning segment. Residues 257 to 261 (YWWGS) lie on the Mitochondrial intermembrane side of the membrane.

It belongs to the cytochrome c oxidase subunit 3 family. In terms of assembly, component of the cytochrome c oxidase (complex IV, CIV), a multisubunit enzyme composed of 14 subunits. The complex is composed of a catalytic core of 3 subunits MT-CO1, MT-CO2 and MT-CO3, encoded in the mitochondrial DNA, and 11 supernumerary subunits COX4I, COX5A, COX5B, COX6A, COX6B, COX6C, COX7A, COX7B, COX7C, COX8 and NDUFA4, which are encoded in the nuclear genome. The complex exists as a monomer or a dimer and forms supercomplexes (SCs) in the inner mitochondrial membrane with NADH-ubiquinone oxidoreductase (complex I, CI) and ubiquinol-cytochrome c oxidoreductase (cytochrome b-c1 complex, complex III, CIII), resulting in different assemblies (supercomplex SCI(1)III(2)IV(1) and megacomplex MCI(2)III(2)IV(2)).

Its subcellular location is the mitochondrion inner membrane. It carries out the reaction 4 Fe(II)-[cytochrome c] + O2 + 8 H(+)(in) = 4 Fe(III)-[cytochrome c] + 2 H2O + 4 H(+)(out). Component of the cytochrome c oxidase, the last enzyme in the mitochondrial electron transport chain which drives oxidative phosphorylation. The respiratory chain contains 3 multisubunit complexes succinate dehydrogenase (complex II, CII), ubiquinol-cytochrome c oxidoreductase (cytochrome b-c1 complex, complex III, CIII) and cytochrome c oxidase (complex IV, CIV), that cooperate to transfer electrons derived from NADH and succinate to molecular oxygen, creating an electrochemical gradient over the inner membrane that drives transmembrane transport and the ATP synthase. Cytochrome c oxidase is the component of the respiratory chain that catalyzes the reduction of oxygen to water. Electrons originating from reduced cytochrome c in the intermembrane space (IMS) are transferred via the dinuclear copper A center (CU(A)) of subunit 2 and heme A of subunit 1 to the active site in subunit 1, a binuclear center (BNC) formed by heme A3 and copper B (CU(B)). The BNC reduces molecular oxygen to 2 water molecules using 4 electrons from cytochrome c in the IMS and 4 protons from the mitochondrial matrix. The polypeptide is Cytochrome c oxidase subunit 3 (MT-CO3) (Tragelaphus strepsiceros (Greater kudu)).